The sequence spans 350 residues: Small ribosomal subunit biogenesis GTPase RsgA (350 aa).

Residues 1-17 (MSKNKLSKGQQRRVNAN) show a composition bias toward polar residues. The interval 1-27 (MSKNKLSKGQQRRVNANHQRRLKTSAE) is disordered. Residues 104 to 273 (TSVLTRPDFY…VIDSPGVREF (170 aa)) enclose the CP-type G domain. GTP-binding positions include 160 to 163 (NKID) and 214 to 222 (GQSGVGKSS). Zn(2+) contacts are provided by cysteine 297, cysteine 302, histidine 304, and cysteine 310.

It belongs to the TRAFAC class YlqF/YawG GTPase family. RsgA subfamily. As to quaternary structure, monomer. Associates with 30S ribosomal subunit, binds 16S rRNA. Requires Zn(2+) as cofactor.

The protein resides in the cytoplasm. Functionally, one of several proteins that assist in the late maturation steps of the functional core of the 30S ribosomal subunit. Helps release RbfA from mature subunits. May play a role in the assembly of ribosomal proteins into the subunit. Circularly permuted GTPase that catalyzes slow GTP hydrolysis, GTPase activity is stimulated by the 30S ribosomal subunit. The sequence is that of Small ribosomal subunit biogenesis GTPase RsgA from Salmonella dublin (strain CT_02021853).